A 189-amino-acid polypeptide reads, in one-letter code: Interferon alpha-6 (189 aa).

Residues 1-23 form the signal peptide; the sequence is MARLCAFLMVLAVLSYWPTCSLG. Disulfide bonds link Cys24–Cys122 and Cys52–Cys162. Asn101 carries N-linked (GlcNAc...) asparagine glycosylation.

Belongs to the alpha/beta interferon family.

The protein resides in the secreted. In terms of biological role, produced by macrophages, IFN-alpha have antiviral activities. Interferon stimulates the production of two enzymes: a protein kinase and an oligoadenylate synthetase. The chain is Interferon alpha-6 (Ifna6) from Mus musculus (Mouse).